Here is a 36-residue protein sequence, read N- to C-terminus: Lambda-hexatoxin-Hv1a (36 aa).

Cystine bridges form between cysteine 3-cysteine 17, cysteine 10-cysteine 22, cysteine 13-cysteine 14, and cysteine 16-cysteine 33.

The protein belongs to the neurotoxin 11 (kappa toxin) family. As to expression, expressed by the venom gland.

It is found in the secreted. Its function is as follows. This excitatory toxin inhibits insect calcium-activated potassium (KCa) channels (Slo-type). The protein is Lambda-hexatoxin-Hv1a of Hadronyche versuta (Blue mountains funnel-web spider).